A 265-amino-acid polypeptide reads, in one-letter code: MARGLKKHLKRLNAPKHWMLDKLGGAFAPKPSSGPHKSRECLPLILIIRNRLKYALTYREVISILMQRHVLVDGKVRTDKTYPAGFMDVISIPKTGENYRLLYDTKGRFRLQSVKDEDAKFKLCKVRSVQFGQKGIPYLNTYDGRTIRYPDPIIKANDTIKIDLETNKIVDFIKFDVGNVVMVTGGRNTGRVGVIKNREKHKGSFETIHVEDALGHQFATRLGNVFTIGKGNKPWVSLPKGKGIKLSIIEEQRKRDAAAQAAANA.

Positions 42-104 constitute an S4 RNA-binding domain; sequence LPLILIIRNR…TGENYRLLYD (63 aa).

Belongs to the eukaryotic ribosomal protein eS4 family.

It is found in the cytoplasm. The polypeptide is Small ribosomal subunit protein eS4 (RPS4) (Oryza sativa subsp. japonica (Rice)).